The primary structure comprises 266 residues: Ras-like protein family member 12 (266 aa).

Residues 27–34 (GRRGAGKS), 74–78 (DTADL), and 134–137 (NKLD) each bind GTP.

Belongs to the small GTPase superfamily. Ras family.

It catalyses the reaction GTP + H2O = GDP + phosphate + H(+). The sequence is that of Ras-like protein family member 12 (RASL12) from Homo sapiens (Human).